Here is a 104-residue protein sequence, read N- to C-terminus: Large ribosomal subunit protein uL24 (104 aa).

This sequence belongs to the universal ribosomal protein uL24 family. As to quaternary structure, part of the 50S ribosomal subunit.

In terms of biological role, one of two assembly initiator proteins, it binds directly to the 5'-end of the 23S rRNA, where it nucleates assembly of the 50S subunit. Its function is as follows. One of the proteins that surrounds the polypeptide exit tunnel on the outside of the subunit. The protein is Large ribosomal subunit protein uL24 of Bartonella quintana (strain Toulouse) (Rochalimaea quintana).